A 128-amino-acid polypeptide reads, in one-letter code: Fluoride-specific ion channel FluC (128 aa).

4 helical membrane passes run 5–25, 35–55, 67–87, and 96–116; these read IVAI…LSLA, LGTL…AVVF, LFVI…SVEV, and FGWA…LTAL. Residues G75 and T78 each contribute to the Na(+) site.

Belongs to the fluoride channel Fluc/FEX (TC 1.A.43) family.

The protein localises to the cell inner membrane. It catalyses the reaction fluoride(in) = fluoride(out). With respect to regulation, na(+) is not transported, but it plays an essential structural role and its presence is essential for fluoride channel function. Its function is as follows. Fluoride-specific ion channel. Important for reducing fluoride concentration in the cell, thus reducing its toxicity. This Burkholderia lata (strain ATCC 17760 / DSM 23089 / LMG 22485 / NCIMB 9086 / R18194 / 383) protein is Fluoride-specific ion channel FluC.